The sequence spans 1286 residues: DNA-directed RNA polymerase 147 kDa polypeptide (1286 aa).

Belongs to the poxviridae DNA-directed RNA polymerase 147 kDa subunit family. As to quaternary structure, the DNA-dependent RNA polymerase used for intermediate and late genes expression consists of eight subunits Rpo30/OPG66, Rpo7/OPG90, Rpo22/OPG103, Rpo147/OPG105, Rpo18/OPG119, Rpo19/OPG131, Rpo132/OPG151 and Rpo35/OPG156. The same holoenzyme, with the addition of the transcription-specificity factor OPG109, is used for early gene expression.

Its subcellular location is the virion. It carries out the reaction RNA(n) + a ribonucleoside 5'-triphosphate = RNA(n+1) + diphosphate. Functionally, part of the DNA-dependent RNA polymerase which catalyzes the transcription of viral DNA into RNA using the four ribonucleoside triphosphates as substrates. Responsible for the transcription of early, intermediate and late genes. DNA-dependent RNA polymerase associates with the early transcription factor (ETF), itself composed of OPG118 and OPG133, thereby allowing the early genes transcription. Late transcription, and probably also intermediate transcription, require newly synthesized RNA polymerase. In Monkeypox virus, this protein is DNA-directed RNA polymerase 147 kDa polypeptide (OPG105).